A 286-amino-acid polypeptide reads, in one-letter code: Interferon-induced 35 kDa protein homolog (286 aa).

The interval 5 to 26 (LQTVLYSLQEEQARLKMRLQEL) is leucine-zipper. 2 NID domains span residues 81–170 (ALVT…GDVE) and 183–266 (FADE…GEVE).

Belongs to the NMI family. In terms of assembly, homodimer. Also interacts with B-ATF. Interacts with TRIM21. Interacts (via NID domains) with NMI (via NID domains); the interaction is direct and is facilitated by TRIM21. Phosphorylated. Dephosphorylation correlates with the formation of a complex with NMI.

The protein localises to the cytoplasm. Its subcellular location is the nucleus. It localises to the secreted. Acts as a signaling pathway regulator involved in innate immune system response. In response to interferon IFN-alpha, associates in a complex with transcriptional regulator NMI to regulate immune response; the complex formation prevents proteasome-mediated degradation of IFI35 and correlates with IFI35 dephosphorylation. In complex with NMI, inhibits virus-triggered type I interferon/IFN-beta production. In complex with NMI, negatively regulates nuclear factor NF-kappa-B signaling by inhibiting the nuclear translocation, activation and transcription of the NF-kappa-B subunit p65/RELA, resulting in the inhibition of endothelial cell proliferation, migration and re-endothelialization of injured arteries. Beside its role as an intracellular signaling pathway regulator, also functions extracellularly as damage-associated molecular patterns (DAMPs) to promote inflammation when actively released by macrophage to the extracellular space during cell injury and pathogen invasion. Macrophage-secreted IFI35 activates NF-kappa-B signaling in adjacent macrophages through Toll-like receptor 4/TLR4 activation, thereby inducing NF-kappa-B translocation from the cytoplasm into the nucleus which promotes the release of pro-inflammatory cytokines. In Mus musculus (Mouse), this protein is Interferon-induced 35 kDa protein homolog.